A 285-amino-acid polypeptide reads, in one-letter code: MQNPKDDVLYAPVEWIDHSEGYSDIRYHKSTDGIAKITINRPEVRNAFRPQTVKEMMTAFSDARFDENIGVIVLTGEGEKAFCSGGDQKVRGDYGGYKDDSGVHHLNVLDFQRDIRSCPKPVVAMVAGYAIGGGHVLHMLCDLTIAAENAIFGQTGPKVGSFDGGWGASYMARLVGQKKAREIWFLCRQYNAQEALDMGLVNTVVPYADLEKETVRWCREMLRNSPIAIRCLKAALNADCDGQAGLQELAGNATMLFYMTEEGQEGRNAFNEKRAPDFSKFRRNP.

Residues R45, 84–88, Y97, 129–133, T155, S161, Y258, and K273 each bind substrate; these read SGGDQ and YAIGG. Residue 154 to 156 participates in hydrogencarbonate binding; sequence QTG.

Belongs to the enoyl-CoA hydratase/isomerase family. MenB subfamily. Requires hydrogencarbonate as cofactor.

It catalyses the reaction 2-succinylbenzoyl-CoA + H(+) = 1,4-dihydroxy-2-naphthoyl-CoA + H2O. It participates in quinol/quinone metabolism; 1,4-dihydroxy-2-naphthoate biosynthesis; 1,4-dihydroxy-2-naphthoate from chorismate: step 6/7. It functions in the pathway quinol/quinone metabolism; menaquinone biosynthesis. Converts o-succinylbenzoyl-CoA (OSB-CoA) to 1,4-dihydroxy-2-naphthoyl-CoA (DHNA-CoA). The chain is 1,4-dihydroxy-2-naphthoyl-CoA synthase from Haemophilus influenzae (strain ATCC 51907 / DSM 11121 / KW20 / Rd).